The chain runs to 230 residues: Large ribosomal subunit protein uL1 (230 aa).

This sequence belongs to the universal ribosomal protein uL1 family. In terms of assembly, part of the 50S ribosomal subunit.

Functionally, binds directly to 23S rRNA. The L1 stalk is quite mobile in the ribosome, and is involved in E site tRNA release. In terms of biological role, protein L1 is also a translational repressor protein, it controls the translation of the L11 operon by binding to its mRNA. The protein is Large ribosomal subunit protein uL1 of Bifidobacterium longum (strain DJO10A).